Reading from the N-terminus, the 172-residue chain is Adenine phosphoribosyltransferase (172 aa).

This sequence belongs to the purine/pyrimidine phosphoribosyltransferase family. Homodimer.

It is found in the cytoplasm. The catalysed reaction is AMP + diphosphate = 5-phospho-alpha-D-ribose 1-diphosphate + adenine. It functions in the pathway purine metabolism; AMP biosynthesis via salvage pathway; AMP from adenine: step 1/1. Catalyzes a salvage reaction resulting in the formation of AMP, that is energically less costly than de novo synthesis. The protein is Adenine phosphoribosyltransferase of Herpetosiphon aurantiacus (strain ATCC 23779 / DSM 785 / 114-95).